A 343-amino-acid chain; its full sequence is Aspartate carbamoyltransferase catalytic subunit (343 aa).

Residues arginine 91 and threonine 92 each coordinate carbamoyl phosphate. Lysine 119 provides a ligand contact to L-aspartate. Residues arginine 141, histidine 171, and glutamine 174 each contribute to the carbamoyl phosphate site. Residues arginine 204 and arginine 259 each coordinate L-aspartate. The carbamoyl phosphate site is built by glycine 300 and proline 301.

Belongs to the aspartate/ornithine carbamoyltransferase superfamily. ATCase family. In terms of assembly, heterododecamer (2C3:3R2) of six catalytic PyrB chains organized as two trimers (C3), and six regulatory PyrI chains organized as three dimers (R2).

It carries out the reaction carbamoyl phosphate + L-aspartate = N-carbamoyl-L-aspartate + phosphate + H(+). Its pathway is pyrimidine metabolism; UMP biosynthesis via de novo pathway; (S)-dihydroorotate from bicarbonate: step 2/3. Its function is as follows. Catalyzes the condensation of carbamoyl phosphate and aspartate to form carbamoyl aspartate and inorganic phosphate, the committed step in the de novo pyrimidine nucleotide biosynthesis pathway. The protein is Aspartate carbamoyltransferase catalytic subunit of Burkholderia orbicola (strain MC0-3).